Reading from the N-terminus, the 399-residue chain is Elongation factor Tu (399 aa).

A tr-type G domain is found at 10–209; it reads KPHVNIGTIG…AVDEYIPTPE (200 aa). A G1 region spans residues 19–26; it reads GHVDHGKT. Residue 19–26 participates in GTP binding; that stretch reads GHVDHGKT. Residue Thr26 participates in Mg(2+) binding. The segment at 60-64 is G2; that stretch reads GITIA. Residues 81–84 form a G3 region; that stretch reads DCPG. Residues 81–85 and 136–139 each bind GTP; these read DCPGH and NKED. Residues 136 to 139 are G4; the sequence is NKED. Residues 174 to 176 form a G5 region; that stretch reads SAL.

Belongs to the TRAFAC class translation factor GTPase superfamily. Classic translation factor GTPase family. EF-Tu/EF-1A subfamily. As to quaternary structure, monomer.

The protein localises to the cytoplasm. It carries out the reaction GTP + H2O = GDP + phosphate + H(+). Functionally, GTP hydrolase that promotes the GTP-dependent binding of aminoacyl-tRNA to the A-site of ribosomes during protein biosynthesis. The sequence is that of Elongation factor Tu from Nitratiruptor sp. (strain SB155-2).